Here is a 426-residue protein sequence, read N- to C-terminus: Serine hydroxymethyltransferase (426 aa).

Residues Leu-113 and 117 to 119 (GHL) contribute to the (6S)-5,6,7,8-tetrahydrofolate site. An N6-(pyridoxal phosphate)lysine modification is found at Lys-222. 363–365 (SAF) is a (6S)-5,6,7,8-tetrahydrofolate binding site.

Belongs to the SHMT family. In terms of assembly, homodimer. Pyridoxal 5'-phosphate serves as cofactor.

It is found in the cytoplasm. It catalyses the reaction (6R)-5,10-methylene-5,6,7,8-tetrahydrofolate + glycine + H2O = (6S)-5,6,7,8-tetrahydrofolate + L-serine. It participates in one-carbon metabolism; tetrahydrofolate interconversion. Its pathway is amino-acid biosynthesis; glycine biosynthesis; glycine from L-serine: step 1/1. Functionally, catalyzes the reversible interconversion of serine and glycine with tetrahydrofolate (THF) serving as the one-carbon carrier. This reaction serves as the major source of one-carbon groups required for the biosynthesis of purines, thymidylate, methionine, and other important biomolecules. Also exhibits THF-independent aldolase activity toward beta-hydroxyamino acids, producing glycine and aldehydes, via a retro-aldol mechanism. The sequence is that of Serine hydroxymethyltransferase from Phocaeicola vulgatus (strain ATCC 8482 / DSM 1447 / JCM 5826 / CCUG 4940 / NBRC 14291 / NCTC 11154) (Bacteroides vulgatus).